The primary structure comprises 243 residues: UPF0758 protein Tery_2667 (243 aa).

The region spanning 113–235 is the MPN domain; it reads VVESPQAAAD…HSSLRQITNL (123 aa). The Zn(2+) site is built by H184, H186, and D197. The JAMM motif signature appears at 184-197; sequence HNHPSGNVEPSPED.

This sequence belongs to the UPF0758 family.

This Trichodesmium erythraeum (strain IMS101) protein is UPF0758 protein Tery_2667.